Consider the following 167-residue polypeptide: UPF0102 protein RB9115 (167 aa).

This sequence belongs to the UPF0102 family.

The sequence is that of UPF0102 protein RB9115 from Rhodopirellula baltica (strain DSM 10527 / NCIMB 13988 / SH1).